A 280-amino-acid chain; its full sequence is Probable endonuclease 4 (280 aa).

Positions 69, 109, 145, 179, 182, 216, 229, 231, and 261 each coordinate Zn(2+).

It belongs to the AP endonuclease 2 family. Zn(2+) is required as a cofactor.

The catalysed reaction is Endonucleolytic cleavage to 5'-phosphooligonucleotide end-products.. In terms of biological role, endonuclease IV plays a role in DNA repair. It cleaves phosphodiester bonds at apurinic or apyrimidinic (AP) sites, generating a 3'-hydroxyl group and a 5'-terminal sugar phosphate. This chain is Probable endonuclease 4, found in Photorhabdus laumondii subsp. laumondii (strain DSM 15139 / CIP 105565 / TT01) (Photorhabdus luminescens subsp. laumondii).